Consider the following 597-residue polypeptide: Miltiradiene synthase KSL2, chloroplastic (597 aa).

A chloroplast-targeting transit peptide spans 1–51 (MSLAFNLRAIPFSGHTIQSRRGLFPVHESPMITTKPFVAVKCSLTTSTDLM). Asp-329, Asp-333, Asn-473, and Glu-481 together coordinate Mg(2+). Residues 329-333 (DDFFD) carry the DDXXD motif motif.

The protein belongs to the terpene synthase family. The cofactor is Mg(2+).

Its subcellular location is the plastid. The protein resides in the chloroplast. It carries out the reaction (+)-copalyl diphosphate = miltiradiene + diphosphate. It participates in secondary metabolite biosynthesis; terpenoid biosynthesis. Its function is as follows. Involved in the biosynthesis of ent-kaurene diterpenoids natural products such as oridonin, miltiradiene, eriocalyxin B and nezukol, known to exhibit antitumor, anti-inflammatory and antibacterial activities. Catalyzes the conversion of (+)-copalyl diphosphate ((+)-CPP) to miltiradiene. This chain is Miltiradiene synthase KSL2, chloroplastic, found in Isodon japonicus (Scutellaria japonica).